Here is a 294-residue protein sequence, read N- to C-terminus: tRNA dimethylallyltransferase (294 aa).

An ATP-binding site is contributed by 10-17; that stretch reads GPTAVGKT. Residue 12–17 participates in substrate binding; the sequence is TAVGKT. Residues 35–38 form an interaction with substrate tRNA region; the sequence is DSQQ.

This sequence belongs to the IPP transferase family. Monomer. Mg(2+) serves as cofactor.

It carries out the reaction adenosine(37) in tRNA + dimethylallyl diphosphate = N(6)-dimethylallyladenosine(37) in tRNA + diphosphate. Its function is as follows. Catalyzes the transfer of a dimethylallyl group onto the adenine at position 37 in tRNAs that read codons beginning with uridine, leading to the formation of N6-(dimethylallyl)adenosine (i(6)A). The chain is tRNA dimethylallyltransferase from Streptococcus pneumoniae serotype 19F (strain G54).